Reading from the N-terminus, the 75-residue chain is Small ribosomal subunit protein bS18 (75 aa).

It belongs to the bacterial ribosomal protein bS18 family. As to quaternary structure, part of the 30S ribosomal subunit. Forms a tight heterodimer with protein bS6.

Its function is as follows. Binds as a heterodimer with protein bS6 to the central domain of the 16S rRNA, where it helps stabilize the platform of the 30S subunit. The chain is Small ribosomal subunit protein bS18 from Cellvibrio japonicus (strain Ueda107) (Pseudomonas fluorescens subsp. cellulosa).